The following is a 184-amino-acid chain: Large ribosomal subunit protein uL22B (184 aa).

A Glycyl lysine isopeptide (Lys-Gly) (interchain with G-Cter in ubiquitin) cross-link involves residue K46. T70 is subject to Phosphothreonine.

This sequence belongs to the universal ribosomal protein uL22 family. As to quaternary structure, component of the large ribosomal subunit (LSU). Mature yeast ribosomes consist of a small (40S) and a large (60S) subunit. The 40S small subunit contains 1 molecule of ribosomal RNA (18S rRNA) and 33 different proteins (encoded by 57 genes). The large 60S subunit contains 3 rRNA molecules (25S, 5.8S and 5S rRNA) and 46 different proteins (encoded by 81 genes). uL22 is associated with the polypeptide exit tunnel.

The protein localises to the cytoplasm. In terms of biological role, component of the ribosome, a large ribonucleoprotein complex responsible for the synthesis of proteins in the cell. The small ribosomal subunit (SSU) binds messenger RNAs (mRNAs) and translates the encoded message by selecting cognate aminoacyl-transfer RNA (tRNA) molecules. The large subunit (LSU) contains the ribosomal catalytic site termed the peptidyl transferase center (PTC), which catalyzes the formation of peptide bonds, thereby polymerizing the amino acids delivered by tRNAs into a polypeptide chain. The nascent polypeptides leave the ribosome through a tunnel in the LSU and interact with protein factors that function in enzymatic processing, targeting, and the membrane insertion of nascent chains at the exit of the ribosomal tunnel. The protein is Large ribosomal subunit protein uL22B of Saccharomyces cerevisiae (strain ATCC 204508 / S288c) (Baker's yeast).